An 81-amino-acid polypeptide reads, in one-letter code: Omega-conotoxin-like 3 (81 aa).

A signal peptide spans 1–22 (MKLTCMMIVAVLFLTASIFITA). The propeptide occupies 23–51 (DNSRNGIENLPRMRRHEMKKPKASKLNKR). 3 disulfides stabilise this stretch: Cys53–Cys71, Cys60–Cys75, and Cys70–Cys79.

The protein belongs to the conotoxin O1 superfamily. Expressed by the venom duct.

The protein resides in the secreted. Omega-conotoxins act at presynaptic membranes, they bind and block voltage-gated calcium channels (Cav). This is Omega-conotoxin-like 3 from Conus imperialis (Imperial cone).